Consider the following 1132-residue polypeptide: Ubiquitin-associated protein 2 (1132 aa).

The segment at 1-29 (MMTSVSNDRCRGAREKPQMPTAHAAQSQK) is disordered. Residues 8-17 (DRCRGAREKP) are compositionally biased toward basic and acidic residues. The UBA domain maps to 48–92 (KNDSDFEAKVKQLMEVTGKNQDECIVALHDCNGDVNKAINILLEG). Disordered stretches follow at residues 95–202 (DTTS…YSES), 221–248 (GTDEGPEGLAKSHSMSQEPPSKSSYGLK), 331–351 (NNQMAPGTANSTSASSYSPQS), 380–479 (LKPP…STVS), 602–679 (TSSA…VSTL), 713–749 (PLSQLSSSLSGHQNSMTSAHATRSTSTPHTHASVEST), 875–919 (PYSG…LNPG), 996–1033 (GGYGGSSQAPNKSTGSGPGKGVSVSSGTGLPDMTGSVY), 1040–1059 (DKQGFHAGTPPPFSLPSALG), and 1087–1132 (PHSQ…YWTN). The span at 109-130 (FGRESSENKENREKRTEREASR) shows a compositional bias: basic and acidic residues. Position 166 is an omega-N-methylarginine (Arg-166). The segment covering 168 to 182 (KRARGRGFGRGRGRG) has biased composition (basic residues). 2 stretches are compositionally biased toward polar residues: residues 233-244 (HSMSQEPPSKSS) and 331-340 (NNQMAPGTAN). Positions 341 to 351 (STSASSYSPQS) are enriched in low complexity. Positions 392 to 404 (SSAQQNDTASPPA) are enriched in polar residues. Phosphoserine occurs at positions 433 and 440. 2 stretches are compositionally biased toward low complexity: residues 436–448 (LSQLSQRQQHQTQ) and 602–618 (TSSALSSTSPVTTSSSY). Over residues 619 to 630 (DQSSVHTRIAYQ) the composition is skewed to polar residues. Phosphoserine is present on Ser-631. Positions 631-644 (SSASPPDSAPGSVA) are enriched in low complexity. Residues 652-662 (SQHTVDTTSSV) are compositionally biased toward polar residues. Residues 713-722 (PLSQLSSSLS) are compositionally biased toward low complexity. A compositionally biased stretch (polar residues) spans 723–742 (GHQNSMTSAHATRSTSTPHT). Low complexity predominate over residues 897–914 (PAQAQQSQSQTHHTAQQP). The segment covering 1101 to 1115 (PSGSGQRSQPSSLQP) has biased composition (low complexity). A compositionally biased stretch (polar residues) spans 1116 to 1132 (KSQASKPTYGSAPYWTN).

In terms of assembly, may interact with ANXA2.

The protein localises to the nucleus. Its subcellular location is the chromosome. It localises to the cytoplasm. Recruits the ubiquitination machinery to RNA polymerase II for polyubiquitination, removal and degradation, when the transcription-coupled nucleotide excision repair (TC-NER) machinery fails to resolve DNA damage. May promote the degradation of ANXA2. This is Ubiquitin-associated protein 2 from Mus musculus (Mouse).